The primary structure comprises 209 residues: PRA1 family protein A3 (209 aa).

Helical transmembrane passes span 51–72 (LYYYRTNYFILFVFVLGLALIT), 76–98 (AILGAALTALSLAFLNDSFAATF), 143–163 (LVFVLLGLTASFVLWFTSCGL), and 164–184 (LWVLYALTTALLMILLHASLR).

Belongs to the PRA1 family.

It localises to the endosome membrane. Functionally, may be involved in both secretory and endocytic intracellular trafficking in the endosomal/prevacuolar compartments. This Arabidopsis thaliana (Mouse-ear cress) protein is PRA1 family protein A3 (PRA1A3).